Here is a 189-residue protein sequence, read N- to C-terminus: Probable nicotinate-nucleotide adenylyltransferase (189 aa).

Belongs to the NadD family.

The enzyme catalyses nicotinate beta-D-ribonucleotide + ATP + H(+) = deamido-NAD(+) + diphosphate. The protein operates within cofactor biosynthesis; NAD(+) biosynthesis; deamido-NAD(+) from nicotinate D-ribonucleotide: step 1/1. In terms of biological role, catalyzes the reversible adenylation of nicotinate mononucleotide (NaMN) to nicotinic acid adenine dinucleotide (NaAD). The protein is Probable nicotinate-nucleotide adenylyltransferase of Bacillus mycoides (strain KBAB4) (Bacillus weihenstephanensis).